Consider the following 1411-residue polypeptide: Tectonin beta-propeller repeat-containing protein 2 (1411 aa).

7 WD repeats span residues 23-66 (IPTK…HLNQ), 67-114 (MRKY…PGRN), 115-161 (KQLR…LDQG), 162-203 (LCNS…EKSV), 204-265 (RQIG…AGGV), 266-309 (KPFE…EYSI), and 310-343 (YLLDTVNQATVAGLEGSGDIVSVSCTENEIFFLK). Disordered stretches follow at residues 379 to 439 (QAEK…GSQP), 463 to 542 (VKRK…QENT), 579 to 637 (RELL…GPQS), and 758 to 779 (YAHGLPSSSSETSVTELGPSCS). Residues 400-420 (SSVASEPRSRSSSLNSTDSGS) are compositionally biased toward low complexity. Composition is skewed to polar residues over residues 475–489 (GSRSTCHSSLESTPC), 496–542 (SPQS…QENT), 608–621 (PNSTQLPFQEQDSS), and 763–779 (PSSSSETSVTELGPSCS). TECPR repeat units follow at residues 945-976 (NVVWALTEQRALLYREGVSSFCPEGEQWKCDI), 994-1027 (QTLWALDIHGNLWFRTGIISKKPQGDDDHWWQVS), 1179-1209 (DALWALDSLGQVFIRTLSKSCPTGMHWTRLD), 1226-1259 (QHIWACDSRGGVYFRVGTQPLNPSLMLPAWIMIE), 1279-1310 (QMLWVLDSRWNVHVRTGITEEMPVGTAWEHVP), and 1322-1353 (RTVWARCPNGDLARRYGVTDKNPAGDYWKKIP). The disordered stretch occupies residues 1388–1411 (HGTQKSSQAAMPHPEDLEDEWEVI).

The protein belongs to the WD repeat KIAA0329 family. In terms of assembly, interacts with the ATG8 family members GABARAP, GABARAPL1, GABARAPL2, MAP1LC3B and MAP1LC3C. As to expression, detected in skin fibroblast (at protein level).

Its function is as follows. Probably plays a role as positive regulator of autophagy. In Homo sapiens (Human), this protein is Tectonin beta-propeller repeat-containing protein 2 (TECPR2).